Reading from the N-terminus, the 234-residue chain is MTAHINAQPTDFAETVIMPGDPLRAKYIAETYLTDAVEVTNVRNMLGYTGYYQGQRISVMGHGMGISSMVLYGHELINFFGVKRIIRIGSLGATQQHVEMRDVILAQAAGTDSPTNAKRSSGYHMATSATFSLLHKAYTKANEKGISVKVGNVFSGDLYYDPDEDMIPALERFGVLGIDMEVAGLYGLAHQQGIESLAILTVSDHCLTGEETTAQERQLSFNNMIELALETALN.

His4 contributes to the a purine D-ribonucleoside binding site. Residues Gly20, Arg24, Arg43, and 87–90 (RIGS) contribute to the phosphate site. Residues 179–181 (DME) and 203–204 (SD) contribute to the a purine D-ribonucleoside site. The active-site Proton donor is the Asp204.

It belongs to the PNP/UDP phosphorylase family. As to quaternary structure, homohexamer; trimer of homodimers.

The catalysed reaction is a purine D-ribonucleoside + phosphate = a purine nucleobase + alpha-D-ribose 1-phosphate. The enzyme catalyses a purine 2'-deoxy-D-ribonucleoside + phosphate = a purine nucleobase + 2-deoxy-alpha-D-ribose 1-phosphate. Functionally, catalyzes the reversible phosphorolytic breakdown of the N-glycosidic bond in the beta-(deoxy)ribonucleoside molecules, with the formation of the corresponding free purine bases and pentose-1-phosphate. The chain is Purine nucleoside phosphorylase DeoD-type from Shewanella oneidensis (strain ATCC 700550 / JCM 31522 / CIP 106686 / LMG 19005 / NCIMB 14063 / MR-1).